The primary structure comprises 258 residues: Snake venom serine protease PA (258 aa).

Residues methionine 1–alanine 18 form the signal peptide. Residues glutamine 19 to leucine 24 constitute a propeptide that is removed on maturation. The Peptidase S1 domain maps to valine 25–alanine 249. 6 cysteine pairs are disulfide-bonded: cysteine 31/cysteine 163, cysteine 50/cysteine 66, cysteine 98/cysteine 256, cysteine 142/cysteine 210, cysteine 174/cysteine 189, and cysteine 200/cysteine 225. Asparagine 44 carries an N-linked (GlcNAc...) asparagine glycan. Catalysis depends on charge relay system residues histidine 65 and aspartate 110. Serine 204 serves as the catalytic Charge relay system.

It belongs to the peptidase S1 family. Snake venom subfamily. As to quaternary structure, monomer. As to expression, expressed by the venom gland.

Its subcellular location is the secreted. Functionally, snake venom serine protease that may act in the hemostasis system of the prey. The polypeptide is Snake venom serine protease PA (Trimeresurus stejnegeri (Chinese green tree viper)).